Here is a 208-residue protein sequence, read N- to C-terminus: LexA repressor (208 aa).

Positions 28 to 48 form a DNA-binding region, H-T-H motif; that stretch reads RAEIARELGFRSANAAEEHLK. Active-site for autocatalytic cleavage activity residues include S125 and K162.

The protein belongs to the peptidase S24 family. Homodimer.

The enzyme catalyses Hydrolysis of Ala-|-Gly bond in repressor LexA.. Represses a number of genes involved in the response to DNA damage (SOS response), including recA and lexA. In the presence of single-stranded DNA, RecA interacts with LexA causing an autocatalytic cleavage which disrupts the DNA-binding part of LexA, leading to derepression of the SOS regulon and eventually DNA repair. The protein is LexA repressor of Aliivibrio fischeri (strain MJ11) (Vibrio fischeri).